Here is a 375-residue protein sequence, read N- to C-terminus: Growth/differentiation factor 8 (375 aa).

The N-terminal stretch at 1 to 18 is a signal peptide; the sequence is MQKLQISVYIYLFVLILA. The propeptide occupies 19–266; that stretch reads GPVDLNENSE…VTDTPKRSRR (248 aa). Asn71 carries N-linked (GlcNAc...) asparagine glycosylation. 4 disulfides stabilise this stretch: Cys272–Cys282, Cys281–Cys340, Cys309–Cys372, and Cys313–Cys374.

The protein belongs to the TGF-beta family. As to quaternary structure, homodimer; disulfide-linked. Interacts with WFIKKN2, leading to inhibit its activity. Interacts with FSTL3. Synthesized as large precursor molecule that undergoes proteolytic cleavage to generate an N-terminal propeptide and a disulfide linked C-terminal dimer, which is the biologically active molecule. The circulating form consists of a latent complex of the C-terminal dimer and other proteins, including its propeptide, which maintain the C-terminal dimer in a latent, inactive state. Ligand activation requires additional cleavage of the prodomain by a tolloid-like metalloproteinase.

It localises to the secreted. Functionally, acts specifically as a negative regulator of skeletal muscle growth. The sequence is that of Growth/differentiation factor 8 (MSTN) from Equus caballus (Horse).